Consider the following 786-residue polypeptide: Wall-associated receptor kinase-like 17 (786 aa).

The signal sequence occupies residues 1-30; it reads MSYKNTNNSHLILFKLLLLLILYSADLTAS. Over 31 to 369 the chain is Extracellular; the sequence is SSCRSECGGC…YRCVGDKTKA (339 aa). Asn69, Asn122, Asn160, Asn165, and Asn274 each carry an N-linked (GlcNAc...) asparagine glycan. The interval 301 to 362 is atypical EGF-like; it reads CICDYTMSII…CVNFEGGYRC (62 aa). Intrachain disulfides connect Cys303–Cys318, Cys340–Cys353, and Cys347–Cys362. A helical membrane pass occupies residues 370 to 390; the sequence is IMIGAGTGFGVLVLVGGVWWL. Residues 391-786 are Cytoplasmic-facing; the sequence is RKFLVKRRMA…VEPLNPLLTW (396 aa). Thr433 carries the phosphothreonine modification. The Protein kinase domain maps to 444-719; the sequence is FSENRVLGHG…REVFTELERI (276 aa). Residues 450–458 and Lys472 contribute to the ATP site; that span reads LGHGGQGTV. Phosphotyrosine is present on Tyr517. Asp570 functions as the Proton acceptor in the catalytic mechanism. Phosphothreonine is present on residues Thr604 and Thr609. Tyr617 is subject to Phosphotyrosine. The segment covering 766–775 has biased composition (low complexity); sequence SSIVASPPSS. The tract at residues 766–786 is disordered; it reads SSIVASPPSSDVEPLNPLLTW.

It belongs to the protein kinase superfamily. Ser/Thr protein kinase family.

The protein resides in the membrane. The catalysed reaction is L-seryl-[protein] + ATP = O-phospho-L-seryl-[protein] + ADP + H(+). It carries out the reaction L-threonyl-[protein] + ATP = O-phospho-L-threonyl-[protein] + ADP + H(+). Functionally, serine/threonine-protein kinase that may function as a signaling receptor of extracellular matrix component. The protein is Wall-associated receptor kinase-like 17 (WAKL17) of Arabidopsis thaliana (Mouse-ear cress).